We begin with the raw amino-acid sequence, 138 residues long: Small ribosomal subunit protein bS6 (138 aa).

Positions 100–138 are disordered; the sequence is SPLAKGREEDDSDSSARRARDDSDDDGDDDEDDRRASAD. A compositionally biased stretch (acidic residues) spans 121 to 131; the sequence is DSDDDGDDDED.

Belongs to the bacterial ribosomal protein bS6 family.

Functionally, binds together with bS18 to 16S ribosomal RNA. The polypeptide is Small ribosomal subunit protein bS6 (Thioalkalivibrio sulfidiphilus (strain HL-EbGR7)).